Here is a 330-residue protein sequence, read N- to C-terminus: ADP-L-glycero-D-manno-heptose-6-epimerase (330 aa).

NADP(+) is bound by residues 11–12 (FI), 32–33 (DN), Lys39, Lys54, 75–79 (EGACS), and Asn92. Tyr139 (proton acceptor) is an active-site residue. Lys143 contacts NADP(+). Asn168 provides a ligand contact to substrate. Val169 and Lys177 together coordinate NADP(+). The Proton acceptor role is filled by Lys177. Residues Arg179, His186, 200-203 (FGEY), Arg213, and Tyr292 each bind substrate.

It belongs to the NAD(P)-dependent epimerase/dehydratase family. HldD subfamily. In terms of assembly, homopentamer. The cofactor is NADP(+).

The enzyme catalyses ADP-D-glycero-beta-D-manno-heptose = ADP-L-glycero-beta-D-manno-heptose. It functions in the pathway nucleotide-sugar biosynthesis; ADP-L-glycero-beta-D-manno-heptose biosynthesis; ADP-L-glycero-beta-D-manno-heptose from D-glycero-beta-D-manno-heptose 7-phosphate: step 4/4. Catalyzes the interconversion between ADP-D-glycero-beta-D-manno-heptose and ADP-L-glycero-beta-D-manno-heptose via an epimerization at carbon 6 of the heptose. The protein is ADP-L-glycero-D-manno-heptose-6-epimerase of Burkholderia mallei (strain NCTC 10247).